A 53-amino-acid polypeptide reads, in one-letter code: Rubredoxin (53 aa).

The region spanning 1–52 is the Rubredoxin-like domain; sequence MAKWRCKICGYIYDEDEGDPDNGISPGTKFEDLPDDWVCPLCGAPKSEFERI. The Fe cation site is built by C6, C9, C39, and C42.

The protein belongs to the rubredoxin family. It depends on Fe(3+) as a cofactor.

Rubredoxin is a small nonheme, iron protein lacking acid-labile sulfide. Its single Fe, chelated to 4 Cys, functions as an electron acceptor and may also stabilize the conformation of the molecule. This is Rubredoxin (rub) from Pyrococcus abyssi (strain GE5 / Orsay).